Reading from the N-terminus, the 86-residue chain is Envelope glycoprotein N (86 aa).

A signal peptide spans 1–29 (MTLYKIVSKPIILLAFFFTRVVFTNEVDG). The Virion surface segment spans residues 30–47 (EELFYKPTCHSDTYEIIL). Residues 48–68 (KKFSSIWILVNTFILLCSFSL) form a helical membrane-spanning segment. Residues 69–86 (FLKYWCFKTLAKETVKGY) lie on the Intravirion side of the membrane.

The protein belongs to the herpesviridae glycoprotein N family. In terms of assembly, interacts (via N-terminus) with gM (via N-terminus). The gM-gN heterodimer forms the gCII complex.

It is found in the virion membrane. The protein resides in the host membrane. It localises to the host Golgi apparatus. Its subcellular location is the host trans-Golgi network. In terms of biological role, envelope glycoprotein necessary for proper maturation of gM and modulation of its membrane fusion activity. Also plays a critical role in virion morphogenesis. This chain is Envelope glycoprotein N, found in Homo sapiens (Human).